We begin with the raw amino-acid sequence, 164 residues long: Large ribosomal subunit protein uL10 (164 aa).

This sequence belongs to the universal ribosomal protein uL10 family. In terms of assembly, part of the ribosomal stalk of the 50S ribosomal subunit. The N-terminus interacts with L11 and the large rRNA to form the base of the stalk. The C-terminus forms an elongated spine to which L12 dimers bind in a sequential fashion forming a multimeric L10(L12)X complex.

Forms part of the ribosomal stalk, playing a central role in the interaction of the ribosome with GTP-bound translation factors. The polypeptide is Large ribosomal subunit protein uL10 (Helicobacter pylori (strain P12)).